Here is a 311-residue protein sequence, read N- to C-terminus: Cytochrome c biogenesis protein CcsA (311 aa).

Transmembrane regions (helical) follow at residues 11 to 31 (VLLLGLMAFGALLLALPLAFW), 44 to 64 (VVQLLVVAANLLLTAQLLWRW), 68 to 88 (GHFPISNLYESLCFLAWGCTF), 101 to 121 (LVPAATTPMALVCVAFASFAL), 146 to 166 (VIMMSYAALLVGSLLSAAVLF), 217 to 237 (TITVGFLLLTVGIISGAVWAN), 251 to 268 (TWALICWLVYAAYLHTRL), and 280 to 300 (VAVSGLFVISVCYIGVNLLGI).

This sequence belongs to the CcmF/CycK/Ccl1/NrfE/CcsA family. As to quaternary structure, may interact with ccs1.

The protein localises to the cellular thylakoid membrane. In terms of biological role, required during biogenesis of c-type cytochromes (cytochrome c6 and cytochrome f) at the step of heme attachment. This is Cytochrome c biogenesis protein CcsA from Synechococcus sp. (strain RCC307).